A 210-amino-acid chain; its full sequence is GTP pyrophosphokinase YwaC (210 aa).

It belongs to the RelA/SpoT family. As to quaternary structure, homotetramer.

It catalyses the reaction GTP + ATP = guanosine 3'-diphosphate 5'-triphosphate + AMP. Its pathway is purine metabolism; ppGpp biosynthesis; ppGpp from GTP: step 1/2. In terms of biological role, functions as a (p)ppGpp synthase; GDP can be used instead of GTP, resulting in an increase of (p)ppGpp synthesis. Overexpression in relA mutants (triple relA-yjbM-ywaC deletions and single relA deletions) leads to growth arrest; GTP levels fall drastically, various guanine-related nucleotides are synthesized (ppGp or pGpp), the cellular transcriptional profile changes dramatically and 70S ribosome dimerization occurs. Overexpression in the presence of a wild-type relA gene does not have these effects. In eubacteria ppGpp (guanosine 3'-diphosphate 5'-diphosphate) is a mediator of the stringent response that coordinates a variety of cellular activities in response to changes in nutritional abundance. activities in response to changes in nutritional abundance. YwaC has probably a minor role in stringent response. The sequence is that of GTP pyrophosphokinase YwaC (ywaC) from Bacillus subtilis (strain 168).